A 295-amino-acid polypeptide reads, in one-letter code: Nucleotide-binding protein RD1_1380 (295 aa).

Residue 16–23 (GPSGAGRS) participates in ATP binding. 63 to 66 (DPRN) contacts GTP.

The protein belongs to the RapZ-like family.

In terms of biological role, displays ATPase and GTPase activities. The chain is Nucleotide-binding protein RD1_1380 from Roseobacter denitrificans (strain ATCC 33942 / OCh 114) (Erythrobacter sp. (strain OCh 114)).